A 334-amino-acid polypeptide reads, in one-letter code: Formamidase (334 aa).

The 247-residue stretch at 14–260 (FLVAAIQFPV…WEIVTGEIYP (247 aa)) folds into the CN hydrolase domain. Glu-60 acts as the Proton acceptor in catalysis. Lys-133 functions as the Proton donor in the catalytic mechanism. Cys-166 functions as the Nucleophile in the catalytic mechanism.

This sequence belongs to the carbon-nitrogen hydrolase superfamily. Aliphatic amidase family.

It catalyses the reaction formamide + H2O = formate + NH4(+). Its function is as follows. Is an aliphatic amidase with a restricted substrate specificity, as it only hydrolyzes formamide. The sequence is that of Formamidase from Helicobacter acinonychis (strain Sheeba).